The sequence spans 237 residues: Uridylate kinase (237 aa).

Residue 11 to 14 (KLSG) coordinates ATP. Residues 18–23 (GGGGIG) form an involved in allosteric activation by GTP region. Glycine 52 is a UMP binding site. Positions 53 and 57 each coordinate ATP. Residues aspartate 72 and 133–140 (SGMPYFST) each bind UMP. The ATP site is built by glutamine 161, tyrosine 167, and aspartate 170.

Belongs to the UMP kinase family. In terms of assembly, homohexamer.

The protein resides in the cytoplasm. It carries out the reaction UMP + ATP = UDP + ADP. The protein operates within pyrimidine metabolism; CTP biosynthesis via de novo pathway; UDP from UMP (UMPK route): step 1/1. With respect to regulation, allosterically activated by GTP. Inhibited by UTP. Catalyzes the reversible phosphorylation of UMP to UDP. The polypeptide is Uridylate kinase (Cutibacterium acnes (strain DSM 16379 / KPA171202) (Propionibacterium acnes)).